Here is a 400-residue protein sequence, read N- to C-terminus: MAKEKFVRSKPHLNVGTIGHIDHGKTTLTAAITKYLSLFGRADYTPYEQIDKAPEEKERGITINIAHIEYETEKRHYAHIDCPGHADYIKNMITGAAQMDGAILVVAATDGPMPQTREHVLLARQVNVPAMIVFINKTDMVDDEELVDLVEMEVRELLNKYEFPGDDLPVIRGSALKAVEASNDPNDEAYAPIKELLDTMDEYFPEPQRETDKPFLMPVEDVFSITGRGTVVTGRIERGVIRPGDEVEIVGMSYEVNKTVVTSVEMFRKILDEGLAGDNVGCLLRGIDKDEVERGQVLAKPGSITPHTTFKAQVYVLKKEEGGRHTPFQKGYKPQFFIRTADVTGELIEFPAGVEMVMPGDNVEMTIKLIYPVAIEEGMRFAIREGGRTVGAGVVTAIVE.

In terms of domain architecture, tr-type G spans 10 to 208 (KPHLNVGTIG…TMDEYFPEPQ (199 aa)). The tract at residues 19–26 (GHIDHGKT) is G1. 19–26 (GHIDHGKT) contacts GTP. Thr26 contributes to the Mg(2+) binding site. The tract at residues 60 to 64 (GITIN) is G2. A G3 region spans residues 81–84 (DCPG). Residues 81 to 85 (DCPGH) and 136 to 139 (NKTD) contribute to the GTP site. The G4 stretch occupies residues 136–139 (NKTD). The interval 174–176 (SAL) is G5.

It belongs to the TRAFAC class translation factor GTPase superfamily. Classic translation factor GTPase family. EF-Tu/EF-1A subfamily. In terms of assembly, monomer.

Its subcellular location is the cytoplasm. It catalyses the reaction GTP + H2O = GDP + phosphate + H(+). Its function is as follows. GTP hydrolase that promotes the GTP-dependent binding of aminoacyl-tRNA to the A-site of ribosomes during protein biosynthesis. This Thermosipho melanesiensis (strain DSM 12029 / CIP 104789 / BI429) protein is Elongation factor Tu.